A 334-amino-acid polypeptide reads, in one-letter code: Oligopeptide transport ATP-binding protein OppF (334 aa).

The ABC transporter domain maps to 12–265; sequence LEIADLKVHF…PLHPYTKALM (254 aa). 57–64 serves as a coordination point for ATP; sequence GESGCGKS.

This sequence belongs to the ABC transporter superfamily. As to quaternary structure, the complex is composed of two ATP-binding proteins (OppD and OppF), two transmembrane proteins (OppB and OppC) and a solute-binding protein (OppA).

It localises to the cell inner membrane. The enzyme catalyses a [peptide](out) + ATP + H2O = a [peptide](in) + ADP + phosphate + H(+). It carries out the reaction L-alanyl-gamma-D-glutamyl-meso-2,6-diaminopimelate(out) + ATP + H2O = L-alanyl-gamma-D-glutamyl-meso-2,6-diaminopimelate(in) + ADP + phosphate + H(+). In terms of biological role, part of the ABC transporter complex OppABCDF involved in the uptake of oligopeptides, including the cell wall murein tripeptide L-alanyl-gamma-D-glutamyl-meso-diaminopimelate. Probably responsible for energy coupling to the transport system. Plays an important nutritional role and is involved in the recycling of cell wall peptides. This chain is Oligopeptide transport ATP-binding protein OppF, found in Salmonella typhimurium (strain LT2 / SGSC1412 / ATCC 700720).